Consider the following 140-residue polypeptide: Holo-[acyl-carrier-protein] synthase (140 aa).

Residues Asp9 and Glu63 each coordinate Mg(2+).

Belongs to the P-Pant transferase superfamily. AcpS family. It depends on Mg(2+) as a cofactor.

It is found in the cytoplasm. The enzyme catalyses apo-[ACP] + CoA = holo-[ACP] + adenosine 3',5'-bisphosphate + H(+). Transfers the 4'-phosphopantetheine moiety from coenzyme A to a Ser of acyl-carrier-protein. In Paraburkholderia phytofirmans (strain DSM 17436 / LMG 22146 / PsJN) (Burkholderia phytofirmans), this protein is Holo-[acyl-carrier-protein] synthase.